Reading from the N-terminus, the 188-residue chain is GTP cyclohydrolase 1 (188 aa).

Zn(2+) is bound by residues Cys76, His79, and Cys148.

The protein belongs to the GTP cyclohydrolase I family. Homomer.

The enzyme catalyses GTP + H2O = 7,8-dihydroneopterin 3'-triphosphate + formate + H(+). Its pathway is cofactor biosynthesis; 7,8-dihydroneopterin triphosphate biosynthesis; 7,8-dihydroneopterin triphosphate from GTP: step 1/1. The protein is GTP cyclohydrolase 1 of Pelotomaculum thermopropionicum (strain DSM 13744 / JCM 10971 / SI).